Here is a 478-residue protein sequence, read N- to C-terminus: Noelin-2 (478 aa).

A signal peptide spans Met-1–Ala-16. 7 N-linked (GlcNAc...) asparagine glycosylation sites follow: Asn-33, Asn-98, Asn-179, Asn-299, Asn-334, Asn-423, and Asn-465. 2 coiled-coil regions span residues Ser-86–Arg-109 and Leu-160–Gly-218. An Olfactomedin-like domain is found at Gly-218–His-470. A disulfide bridge connects residues Cys-219 and Cys-401.

Peripherally associated with AMPAR complex. AMPAR complex consists of an inner core made of 4 pore-forming GluA/GRIA proteins (GRIA1, GRIA2, GRIA3 and GRIA4) and 4 major auxiliary subunits arranged in a twofold symmetry. One of the two pairs of distinct binding sites is occupied either by CNIH2, CNIH3 or CACNG2, CACNG3. The other harbors CACNG2, CACNG3, CACNG4, CACNG8 or GSG1L. This inner core of AMPAR complex is complemented by outer core constituents binding directly to the GluA/GRIA proteins at sites distinct from the interaction sites of the inner core constituents. Outer core constituents include at least PRRT1, PRRT2, CKAMP44/SHISA9, FRRS1L and NRN1. The proteins of the inner and outer core serve as a platform for other, more peripherally associated AMPAR constituents, including OLFM2. Alone or in combination, these auxiliary subunits control the gating and pharmacology of the AMPAR complex and profoundly impact their biogenesis and protein processing. Interacts with GRIA2. Interacts with OLFM1 and OLFM3. Interacts with SRF; the interaction promotes dissociation of SRF from the transcriptional repressor HEY2. Interacts with RUNX2. As to expression, expressed in the brain (at protein level). Expressed in carotid arteries and the aorta, mainly in aortic SMCs.

The protein resides in the secreted. Its subcellular location is the synapse. The protein localises to the membrane. It localises to the nucleus. It is found in the cytoplasm. Its function is as follows. Involved in transforming growth factor beta (TGF-beta)-induced smooth muscle differentiation. TGF-beta induces expression and nuclear translocation of OLFM2 where it binds to SRF, causing its dissociation from the transcriptional repressor HEY2/HERP1 and facilitating binding of SRF to target genes. Plays a role in AMPAR complex organization. Is a regulator of vascular smooth-muscle cell (SMC) phenotypic switching, that acts by promoting RUNX2 and inhibiting MYOCD binding to SRF. SMC phenotypic switching is the process through which vascular SMCs undergo transition between a quiescent contractile phenotype and a proliferative synthetic phenotype in response to pathological stimuli. SMC phenotypic plasticity is essential for vascular development and remodeling. The polypeptide is Noelin-2 (Olfm2) (Rattus norvegicus (Rat)).